The chain runs to 163 residues: NF-kappa-B inhibitor-interacting Ras-like protein 2 (163 aa).

The segment at 1 to 163 (MGKSCKVVIC…SANWNLHPDH (163 aa)) is small GTPase-like. GTP is bound at residue 11–18 (GQHGVGKT). Residues 35 to 43 (MIETQEDIY) carry the Effector region motif. Residues 61–65 (DTRGL) and 120–123 (NKSD) contribute to the GTP site.

It belongs to the small GTPase superfamily. Ras family. KappaB-Ras subfamily.

It localises to the cytoplasm. In terms of biological role, atypical Ras-like protein that acts as a potent regulator of NF-kappa-B activity by preventing the degradation of NF-kappa-B inhibitor beta (NFKBIB) by most signals, explaining why NFKBIB is more resistant to degradation. The sequence is that of NF-kappa-B inhibitor-interacting Ras-like protein 2 (nkiras2) from Xenopus laevis (African clawed frog).